The chain runs to 375 residues: Dual-specificity RNA methyltransferase RlmN (375 aa).

The active-site Proton acceptor is glutamate 98. In terms of domain architecture, Radical SAM core spans 106–346 (GGKRRTLCVS…VRTTRGDDID (241 aa)). An intrachain disulfide couples cysteine 113 to cysteine 349. Positions 120, 124, and 127 each coordinate [4Fe-4S] cluster. Residues 174 to 175 (GE), serine 206, 228 to 230 (SLH), and asparagine 306 each bind S-adenosyl-L-methionine. The active-site S-methylcysteine intermediate is cysteine 349.

The protein belongs to the radical SAM superfamily. RlmN family. It depends on [4Fe-4S] cluster as a cofactor.

The protein resides in the cytoplasm. It catalyses the reaction adenosine(2503) in 23S rRNA + 2 reduced [2Fe-2S]-[ferredoxin] + 2 S-adenosyl-L-methionine = 2-methyladenosine(2503) in 23S rRNA + 5'-deoxyadenosine + L-methionine + 2 oxidized [2Fe-2S]-[ferredoxin] + S-adenosyl-L-homocysteine. The enzyme catalyses adenosine(37) in tRNA + 2 reduced [2Fe-2S]-[ferredoxin] + 2 S-adenosyl-L-methionine = 2-methyladenosine(37) in tRNA + 5'-deoxyadenosine + L-methionine + 2 oxidized [2Fe-2S]-[ferredoxin] + S-adenosyl-L-homocysteine. Functionally, specifically methylates position 2 of adenine 2503 in 23S rRNA and position 2 of adenine 37 in tRNAs. m2A2503 modification seems to play a crucial role in the proofreading step occurring at the peptidyl transferase center and thus would serve to optimize ribosomal fidelity. The protein is Dual-specificity RNA methyltransferase RlmN of Chromohalobacter salexigens (strain ATCC BAA-138 / DSM 3043 / CIP 106854 / NCIMB 13768 / 1H11).